Consider the following 402-residue polypeptide: NADH-quinone oxidoreductase subunit D (402 aa).

The protein belongs to the complex I 49 kDa subunit family. NDH-1 is composed of 14 different subunits. Subunits NuoB, C, D, E, F, and G constitute the peripheral sector of the complex.

It is found in the cell inner membrane. The catalysed reaction is a quinone + NADH + 5 H(+)(in) = a quinol + NAD(+) + 4 H(+)(out). In terms of biological role, NDH-1 shuttles electrons from NADH, via FMN and iron-sulfur (Fe-S) centers, to quinones in the respiratory chain. The immediate electron acceptor for the enzyme in this species is believed to be ubiquinone. Couples the redox reaction to proton translocation (for every two electrons transferred, four hydrogen ions are translocated across the cytoplasmic membrane), and thus conserves the redox energy in a proton gradient. The sequence is that of NADH-quinone oxidoreductase subunit D from Maricaulis maris (strain MCS10) (Caulobacter maris).